A 222-amino-acid polypeptide reads, in one-letter code: UPF0758 protein Ppha_0935 (222 aa).

An MPN domain is found at 100–222; sequence KIQAARDVFE…CFSFRESGLL (123 aa). H171, H173, and D184 together coordinate Zn(2+). Positions 171 to 184 match the JAMM motif motif; that stretch reads HNHPSGDVEPSNAD.

Belongs to the UPF0758 family.

The chain is UPF0758 protein Ppha_0935 from Pelodictyon phaeoclathratiforme (strain DSM 5477 / BU-1).